Here is a 112-residue protein sequence, read N- to C-terminus: Nitrogen regulatory protein P-II (112 aa).

Tyrosine 51 is subject to O-UMP-tyrosine.

This sequence belongs to the P(II) protein family. In terms of assembly, homotrimer.

P-II indirectly controls the transcription of the glutamine synthetase gene (glnA). P-II prevents NR-II-catalyzed conversion of NR-I to NR-I-phosphate, the transcriptional activator of glnA. When P-II is uridylylated to P-II-UMP, these events are reversed. When the ratio of Gln to 2-ketoglutarate decreases, P-II is uridylylated to P-II-UMP, which causes the deadenylation of glutamine synthetase, so activating the enzyme. The polypeptide is Nitrogen regulatory protein P-II (glnB) (Rhodobacter capsulatus (Rhodopseudomonas capsulata)).